The primary structure comprises 130 residues: Cuticle protein 14 isoform b (130 aa).

Residues 24–90 form the Chitin-binding type R&amp;R domain; it reads IGNYNFGYNE…NVHTNEPGTD (67 aa).

The protein is Cuticle protein 14 isoform b of Limulus polyphemus (Atlantic horseshoe crab).